A 312-amino-acid polypeptide reads, in one-letter code: NGFGRIGSLVLRATLDRKDVKVVAINDPFIEGEYMAYMFKYDSVHGRYEGDVQGDKHGITINGEQIKTLAMMDPTQIPWGEVGADYVVESTGVFTTVDKCQAHLKGGAKKVVISAPSADAPMFVMGVNADKYDPKQHTVVSNASCTTNCLAPLAKVVNDTFGIKEALMTTVHATTATQKTVDGPSKKDWRGGRGASANIIPSSTGAAKAVGKVIPELNGKLTGMAFRVPTQDVSVVDLTCILEKPAKYEDIMAALKAASEGPMKGILGYTEDDVVSSDFVSDPASSTVDAKAGIMLSPTFVKLVSWYDNEWG.

NAD(+) contacts are provided by residues 5–6 (RI) and aspartate 27. Residues 144–146 (SCT), threonine 175, 204–205 (TG), and arginine 227 each bind D-glyceraldehyde 3-phosphate. Cysteine 145 acts as the Nucleophile in catalysis. Asparagine 309 contacts NAD(+).

It belongs to the glyceraldehyde-3-phosphate dehydrogenase family. In terms of assembly, homotetramer.

The protein localises to the cytoplasm. It carries out the reaction D-glyceraldehyde 3-phosphate + phosphate + NAD(+) = (2R)-3-phospho-glyceroyl phosphate + NADH + H(+). Its pathway is carbohydrate degradation; glycolysis; pyruvate from D-glyceraldehyde 3-phosphate: step 1/5. Functionally, key enzyme in glycolysis that catalyzes the first step of the pathway by converting D-glyceraldehyde 3-phosphate (G3P) into 3-phospho-D-glyceroyl phosphate. Essential for the maintenance of cellular ATP levels and carbohydrate metabolism. The chain is Glyceraldehyde-3-phosphate dehydrogenase, cytosolic (GapC) from Scenedesmus vacuolatus (Green alga).